Consider the following 105-residue polypeptide: Imizoquin biosynthesis cluster protein I (105 aa).

Polar residues predominate over residues 1-15 (MSSGEPTTMTPSPSE). Residues 1–43 (MSSGEPTTMTPSPSERTPLLSNGSGGAADDGGTTVTISKPNDG) are disordered.

It functions in the pathway secondary metabolite biosynthesis. Its function is as follows. Part of the gene cluster that mediates the biosynthesis of imizoquins A to D, tripeptide-derived alkaloids that serve a protective role against oxidative stress that are essential for normal germination. ImqB is a canonical three-module NRPS that assembles the tripeptide backbone of the imizoquins via condensation of Trp, Tyr, and Leu-derived precursors. N-methylation by imqF and phenol oxidation by imqC, followed by cyclization via the FAD-dependent oxidase imqH carry out the three-step transformation of L-tyrosine into tetrahydroisoquinoline. Importantly, this sequence requires the presence of a free amine in the tyrosine moiety, indicating that isoquinoline formation occurs prior to peptide bond formation. The imidazolidin-4-one ring of imizoquins could form following additional oxidation of the methyl-derived bridgehead carbon by imqH. Lastly, O-methylation by imqG and leucine hydroxylation by imqE complete biosynthesis of the imizoquins. The chain is Imizoquin biosynthesis cluster protein I from Aspergillus flavus (strain ATCC 200026 / FGSC A1120 / IAM 13836 / NRRL 3357 / JCM 12722 / SRRC 167).